The chain runs to 974 residues: Probable proton ATPase 1A (974 aa).

The segment covering 1–23 (MSSKKYELDAAAFEDKPESHSDA) has biased composition (basic and acidic residues). Positions 1–61 (MSSKKYELDA…ATDLLPPSKG (61 aa)) are disordered. Topologically, residues 1–92 (MSSKKYELDA…KTPSWLIYVR (92 aa)) are cytoplasmic. The chain crosses the membrane as a helical span at residues 93–112 (GLWGPMPAALWIAIIIEFAL). Over 113–117 (ENWPD) the chain is Extracellular. A helical membrane pass occupies residues 118–137 (GAILFAIQIANATIGWYETI). Residues 138-264 (KAGDAVAALK…LGNIHVILRR (127 aa)) are Cytoplasmic-facing. A helical transmembrane segment spans residues 265–286 (VMFSLCAISFMLCMCCFIYLLA). The Extracellular segment spans residues 287 to 294 (RFYETFRH). The chain crosses the membrane as a helical span at residues 295 to 321 (ALQFAVVVLVVSIPIALEIVVTTTLAV). Topologically, residues 322–630 (GSKHLSKHKI…AVHGATDAAR (309 aa)) are cytoplasmic. D351 acts as the 4-aspartylphosphate intermediate in catalysis. Mg(2+) contacts are provided by D605 and D609. A helical membrane pass occupies residues 631–651 (AAADMVLTEPGLSVVVEAMLV). Residues 652-661 (SREVFQRMLS) lie on the Extracellular side of the membrane. A helical membrane pass occupies residues 662-684 (FLTYRISATLQLVCFFFIACFSL). Residues 685-697 (TPKAYGSVDPHFQ) lie on the Cytoplasmic side of the membrane. A helical membrane pass occupies residues 698 to 712 (FFHLPVLMFMLITLL). At 713–737 (NDGCLMTIGYDHVIPSERPQKWNLP) the chain is on the extracellular side. Residue D714 participates in Mg(2+) binding. Residues 738-761 (VVFVSASILAAVACGSSLMLLWIG) form a helical membrane-spanning segment. Residues 762 to 812 (LEGYSSQYYENSWFHRLGLAQLPQGKLVTMMYLKISISDFLTLFSSRTGGH) lie on the Cytoplasmic side of the membrane. The helical transmembrane segment at 813 to 840 (FFFYMPPSPILFCGAIISLLVSTMAASF) threads the bilayer. Over 841 to 868 (WHKSRPDNVLTEGLAWGQTNAEKLLPLW) the chain is Extracellular. A helical membrane pass occupies residues 869 to 887 (VWIYCIVWWFVQDVVKVLA). Residues 888 to 974 (HICMDAVDLF…VNVYVSRDQK (87 aa)) are Cytoplasmic-facing. The span at 950–959 (GLREDTHSPI) shows a compositional bias: basic and acidic residues. Residues 950–974 (GLREDTHSPIEEASPVNVYVSRDQK) are disordered.

Belongs to the cation transport ATPase (P-type) (TC 3.A.3) family. Type IIIA subfamily.

It is found in the membrane. The catalysed reaction is ATP + H2O + H(+)(in) = ADP + phosphate + 2 H(+)(out). This Leishmania donovani protein is Probable proton ATPase 1A (H1A).